Reading from the N-terminus, the 266-residue chain is MGSTQSVSGTPARPLPRNKQVARVADPRSPSAGIQRTPIQVESSPQPSLPAEQLNGLKQAQDPDPRSPTLGIARTPMKISGPDPQCSLVKELSEVLETEASESISSPELALPRETPLFYDLDLSSDPQLSPEDQLLPWSQAELDPKQVFTKEEAKQSAETIAASQNSDKPSRDPETPQSSGSKRSRRKANSKVLGRSPLTILQDDNSPGTLTLRQGKRPSALSENVKDLKEGVVLGTGRFLKAGGGAREPNQDHDKENQHFALLES.

Residues 1 to 84 form a disordered region; it reads MGSTQSVSGT…TPMKISGPDP (84 aa). Phosphoserine is present on residues S29 and S31. The segment covering 32–46 has biased composition (polar residues); the sequence is AGIQRTPIQVESSPQ. T37 carries the post-translational modification Phosphothreonine. S44 and S67 each carry phosphoserine. Position 75 is a phosphothreonine (T75). Residues 90 to 119 form an F-box-like region; that stretch reads KELSEVLETEASESISSPELALPRETPLFY. S93 carries the post-translational modification Phosphoserine. Disordered stretches follow at residues 120 to 225 and 242 to 266; these read DLDL…LSEN and KAGG…LLES. Over residues 143 to 156 the composition is skewed to basic and acidic residues; it reads LDPKQVFTKEEAKQ. Positions 157-168 are enriched in polar residues; sequence SAETIAASQNSD. S197 bears the Phosphoserine mark. T200 bears the Phosphothreonine mark. Residues 203-213 show a composition bias toward polar residues; it reads QDDNSPGTLTL. A Phosphoserine modification is found at S207. At T210 the chain carries Phosphothreonine. Positions 250-259 are enriched in basic and acidic residues; that stretch reads PNQDHDKENQ. The short motif at 256-258 is the KEN box element; that stretch reads KEN.

As to quaternary structure, interacts with SKP1. Part of a SCF (SKP1-cullin-F-box) protein ligase complex. In terms of processing, ubiquitinated and degraded by the APC/C-Cdh1 complex.

The protein resides in the cytoplasm. Its subcellular location is the cytosol. The protein operates within protein modification; protein ubiquitination. F-box-like protein which is required for entry into mitosis. Acts by participating in E3 ligase complexes that mediate the ubiquitination and degradation of WEE1 kinase at G2/M phase. The sequence is that of Cell division cycle-associated protein 3 (Cdca3) from Mus musculus (Mouse).